Consider the following 297-residue polypeptide: MTSLAAPQTGLLRQYLVLTKPRVTQLAVFCAIIGMFLAVPGLPDPGRVVFGTLGIWLLAAAAFAINCLIEQEIDARMLRTARRATARGTISAAQVISLSGLLGGAGMLVLYHLVNPLTMWLTFATFVGYAIIYTVILKPRTPQNIVIGGLSGAMPPALGWAAVADAVPAEAWVLVLIIFIWTPPHFWALALYRNHDYAKAGLPMLPVTHGQRFTRLHILLYSLALVATTTLPYIIRMSGLLYLASALALGGMFVAYAWRLYREYSDALARRLFRFSILYLALLFAALLMDHWAGLLA.

9 helical membrane-spanning segments follow: residues 23-43 (VTQL…PGLP), 49-69 (VFGT…NCLI), 90-110 (ISAA…MLVL), 117-137 (LTMW…TVIL), 144-164 (NIVI…AAVA), 171-191 (AWVL…ALAL), 215-235 (RLHI…PYII), 238-258 (SGLL…AYAW), and 277-297 (ILYL…GLLA).

This sequence belongs to the UbiA prenyltransferase family. Protoheme IX farnesyltransferase subfamily.

Its subcellular location is the cell inner membrane. It carries out the reaction heme b + (2E,6E)-farnesyl diphosphate + H2O = Fe(II)-heme o + diphosphate. It functions in the pathway porphyrin-containing compound metabolism; heme O biosynthesis; heme O from protoheme: step 1/1. In terms of biological role, converts heme B (protoheme IX) to heme O by substitution of the vinyl group on carbon 2 of heme B porphyrin ring with a hydroxyethyl farnesyl side group. In Bordetella petrii (strain ATCC BAA-461 / DSM 12804 / CCUG 43448), this protein is Protoheme IX farnesyltransferase.